Consider the following 334-residue polypeptide: Holliday junction branch migration complex subunit RuvB (334 aa).

The tract at residues 4-184 is large ATPase domain (RuvB-L); it reads ADRIISPNAT…FGIVQRLEFY (181 aa). Residues Ile-23, Arg-24, Gly-65, Lys-68, Thr-69, Thr-70, 131–133, Arg-174, Tyr-184, and Arg-221 each bind ATP; that span reads EDY. Residue Thr-69 coordinates Mg(2+). The segment at 185-255 is small ATPAse domain (RuvB-S); the sequence is SVEDLRHIVA…VADKALNMLN (71 aa). The interval 258-334 is head domain (RuvB-H); the sequence is LHGFDHMDRR…YNHFGLTMPE (77 aa). DNA is bound by residues Arg-313 and Arg-318.

This sequence belongs to the RuvB family. In terms of assembly, homohexamer. Forms an RuvA(8)-RuvB(12)-Holliday junction (HJ) complex. HJ DNA is sandwiched between 2 RuvA tetramers; dsDNA enters through RuvA and exits via RuvB. An RuvB hexamer assembles on each DNA strand where it exits the tetramer. Each RuvB hexamer is contacted by two RuvA subunits (via domain III) on 2 adjacent RuvB subunits; this complex drives branch migration. In the full resolvosome a probable DNA-RuvA(4)-RuvB(12)-RuvC(2) complex forms which resolves the HJ.

It localises to the cytoplasm. It catalyses the reaction ATP + H2O = ADP + phosphate + H(+). The RuvA-RuvB-RuvC complex processes Holliday junction (HJ) DNA during genetic recombination and DNA repair, while the RuvA-RuvB complex plays an important role in the rescue of blocked DNA replication forks via replication fork reversal (RFR). RuvA specifically binds to HJ cruciform DNA, conferring on it an open structure. The RuvB hexamer acts as an ATP-dependent pump, pulling dsDNA into and through the RuvAB complex. RuvB forms 2 homohexamers on either side of HJ DNA bound by 1 or 2 RuvA tetramers; 4 subunits per hexamer contact DNA at a time. Coordinated motions by a converter formed by DNA-disengaged RuvB subunits stimulates ATP hydrolysis and nucleotide exchange. Immobilization of the converter enables RuvB to convert the ATP-contained energy into a lever motion, pulling 2 nucleotides of DNA out of the RuvA tetramer per ATP hydrolyzed, thus driving DNA branch migration. The RuvB motors rotate together with the DNA substrate, which together with the progressing nucleotide cycle form the mechanistic basis for DNA recombination by continuous HJ branch migration. Branch migration allows RuvC to scan DNA until it finds its consensus sequence, where it cleaves and resolves cruciform DNA. In Hahella chejuensis (strain KCTC 2396), this protein is Holliday junction branch migration complex subunit RuvB.